Here is a 457-residue protein sequence, read N- to C-terminus: Paired box protein Pax-8 (457 aa).

Positions 9–135 (GHGGLNQLGG…SSINRIIRTK (127 aa)) form a DNA-binding region, paired. Residues 12–68 (GLNQLGGAFVNGRPLPEVVRQRIVDLAHQGVRPCDISRQLRVSHGCVSKILGRYYET) form a PAI subdomain region. The segment at 87–135 (KVVEKIGDYKRQNPTMFAWEIRDRLLAEGVCDNDTVPSVSSINRIIRTK) is RED subdomain. Positions 159 to 182 (LIPSSAVTPPESPQSDSLGSTYSI) are enriched in polar residues. The disordered stretch occupies residues 159–224 (LIPSSAVTPP…SSSSGPRKHL (66 aa)). At S304 the chain carries Phosphoserine.

As to quaternary structure, interacts with WWTR1. Expressed in the developing excretory system and the thyroid gland.

The protein resides in the nucleus. In terms of biological role, thought to encode a transcription factor. It may have a role in kidney cell differentiation. May play a regulatory role in mammalian development. This chain is Paired box protein Pax-8 (Pax8), found in Mus musculus (Mouse).